The sequence spans 938 residues: E3 ubiquitin-protein ligase CBL-B (938 aa).

Positions 35–167 are 4H; that stretch reads PPKQAAADRR…KAIFPNGQFQ (133 aa). The 309-residue stretch at 35–343 folds into the Cbl-PTB domain; the sequence is PPKQAAADRR…GRSYNPDLTG (309 aa). The interval 168–240 is EF-hand-like; that stretch reads GDNFRITKAD…FEFDIFTRLF (73 aa). Aspartate 221, threonine 223, asparagine 225, tyrosine 227, and glutamate 232 together coordinate Ca(2+). The SH2-like stretch occupies residues 241 to 343; the sequence is QPWGSILRNW…GRSYNPDLTG (103 aa). Serine 282 carries the post-translational modification Phosphoserine; by PKC/PRKCQ. Arginine 286 contacts 4-O-phospho-L-tyrosine. The linker stretch occupies residues 344 to 372; that stretch reads LCEPTPHDHIKVTQEQYELYCEMGSTFQL. Tyrosine 363 carries the post-translational modification Phosphotyrosine. The segment at 373–412 adopts an RING-type zinc-finger fold; the sequence is CKICAENDKDVKIEPCGHLMCTSCLTAWQESDGQGCPFCR. Residues 465-588 form a disordered region; the sequence is ASVRKCTDRQ…SVPSRDQPMP (124 aa). Residues 473-486 show a composition bias toward polar residues; that stretch reads RQNSPVTSPGSSPL. 6 positions are modified to phosphoserine: serine 476, serine 480, serine 484, serine 521, serine 525, and serine 529. Positions 543–567 are interaction with VAV1; the sequence is PLPAPPPPLRDPPPPPERPPPIPPD. Residues 544–566 show a composition bias toward pro residues; the sequence is LPAPPPPLRDPPPPPERPPPIPP. Position 633 is a phosphoserine (serine 633). Phosphotyrosine is present on residues tyrosine 664 and tyrosine 708. Disordered regions lie at residues 702 to 725 and 771 to 885; these read EEDD…PSHC and DALP…EAAL. Over residues 714 to 724 the composition is skewed to polar residues; sequence HPVSLNSQPSH. Residues 775 to 784 are compositionally biased toward pro residues; that stretch reads PSLPPPPPPA. The span at 794 to 804 shows a compositional bias: low complexity; the sequence is PPGSSSRPSSG. The span at 839–855 shows a compositional bias: polar residues; it reads NRASQDYDQLPSSSDGS. Tyrosine 845 carries the phosphotyrosine modification. The interval 847-883 is interaction with SH3KBP1; that stretch reads QLPSSSDGSQAPARPPKPRPRRTAPEIHHRKPHGPEA. A compositionally biased stretch (basic residues) spans 862 to 878; the sequence is PKPRPRRTAPEIHHRKP. A UBA domain is found at 887-926; that stretch reads NVDAKIAKLMGEGYAFEEVKRALEIAQNNLEVARSILREF.

Interacts with SH3 domain-containing proteins LCK, CRK and SORBS1. Interacts with LCP2 and ZAP70. Interacts with CBL. Interacts with SH3 domain-containing proteins VAV1, FYN, FGR, PLCG1, GRB2, CRKL, PIK3R1 and SH3KBP1/CIN85. Identified in heterotrimeric complexes with SH3KBP1/CIN85, CD2AP and ARHGEF7, where one CBLB peptide binds two copies of the other protein. Interacts with poly-ubiquitinated proteins. Dimerization is required for the binding of poly-ubiquitin, but not for the binding of mono-ubiquitin. Interacts with EGFR (phosphorylated). Interacts with IFT20. Phosphorylated on tyrosine and serine residues upon TCR or BCR activation, and upon various types of cell stimulation. Post-translationally, auto-ubiquitinated upon EGF-mediated cell activation or upon T-cell costimulation by CD28; which promotes proteasomal degradation.

It localises to the cytoplasm. It catalyses the reaction S-ubiquitinyl-[E2 ubiquitin-conjugating enzyme]-L-cysteine + [acceptor protein]-L-lysine = [E2 ubiquitin-conjugating enzyme]-L-cysteine + N(6)-ubiquitinyl-[acceptor protein]-L-lysine.. It functions in the pathway protein modification; protein ubiquitination. Its function is as follows. E3 ubiquitin-protein ligase which accepts ubiquitin from specific E2 ubiquitin-conjugating enzymes, and transfers it to substrates, generally promoting their degradation by the proteasome. Negatively regulates TCR (T-cell receptor), BCR (B-cell receptor) and FCER1 (high affinity immunoglobulin epsilon receptor) signal transduction pathways. In naive T-cells, inhibits VAV1 activation upon TCR engagement and imposes a requirement for CD28 costimulation for proliferation and IL-2 production. Also acts by promoting PIK3R1/p85 ubiquitination, which impairs its recruitment to the TCR and subsequent activation. In activated T-cells, inhibits PLCG1 activation and calcium mobilization upon restimulation and promotes anergy. In B-cells, acts by ubiquitinating SYK and promoting its proteasomal degradation. Slightly promotes SRC ubiquitination. May be involved in EGFR ubiquitination and internalization. May be functionally coupled with the E2 ubiquitin-protein ligase UB2D3. In association with CBL, required for proper feedback inhibition of ciliary platelet-derived growth factor receptor-alpha (PDGFRA) signaling pathway via ubiquitination and internalization of PDGFRA. In Rattus norvegicus (Rat), this protein is E3 ubiquitin-protein ligase CBL-B (Cblb).